The chain runs to 378 residues: Succinyl-diaminopimelate desuccinylase (378 aa).

H68 contributes to the Zn(2+) binding site. D70 is an active-site residue. D101 is a Zn(2+) binding site. E135 acts as the Proton acceptor in catalysis. Zn(2+)-binding residues include E136, E164, and H350.

The protein belongs to the peptidase M20A family. DapE subfamily. As to quaternary structure, homodimer. Zn(2+) serves as cofactor. Co(2+) is required as a cofactor.

It catalyses the reaction N-succinyl-(2S,6S)-2,6-diaminopimelate + H2O = (2S,6S)-2,6-diaminopimelate + succinate. The protein operates within amino-acid biosynthesis; L-lysine biosynthesis via DAP pathway; LL-2,6-diaminopimelate from (S)-tetrahydrodipicolinate (succinylase route): step 3/3. In terms of biological role, catalyzes the hydrolysis of N-succinyl-L,L-diaminopimelic acid (SDAP), forming succinate and LL-2,6-diaminopimelate (DAP), an intermediate involved in the bacterial biosynthesis of lysine and meso-diaminopimelic acid, an essential component of bacterial cell walls. The polypeptide is Succinyl-diaminopimelate desuccinylase (Acinetobacter baumannii (strain ACICU)).